We begin with the raw amino-acid sequence, 155 residues long: Ribonuclease H (155 aa).

The RNase H type-1 domain occupies 4-145 (QQKVVEIYTD…ADALARKAIT (142 aa)). Mg(2+)-binding residues include aspartate 13, glutamate 51, aspartate 73, and aspartate 137.

The protein belongs to the RNase H family. Monomer. Mg(2+) is required as a cofactor.

Its subcellular location is the cytoplasm. The catalysed reaction is Endonucleolytic cleavage to 5'-phosphomonoester.. Functionally, endonuclease that specifically degrades the RNA of RNA-DNA hybrids. The polypeptide is Ribonuclease H (Bartonella quintana (strain Toulouse) (Rochalimaea quintana)).